Consider the following 199-residue polypeptide: ATP-dependent Clp protease proteolytic subunit (199 aa).

Catalysis depends on Ser-97, which acts as the Nucleophile. Residue His-122 is part of the active site.

This sequence belongs to the peptidase S14 family. As to quaternary structure, fourteen ClpP subunits assemble into 2 heptameric rings which stack back to back to give a disk-like structure with a central cavity, resembling the structure of eukaryotic proteasomes.

The protein resides in the cytoplasm. The enzyme catalyses Hydrolysis of proteins to small peptides in the presence of ATP and magnesium. alpha-casein is the usual test substrate. In the absence of ATP, only oligopeptides shorter than five residues are hydrolyzed (such as succinyl-Leu-Tyr-|-NHMec, and Leu-Tyr-Leu-|-Tyr-Trp, in which cleavage of the -Tyr-|-Leu- and -Tyr-|-Trp bonds also occurs).. Cleaves peptides in various proteins in a process that requires ATP hydrolysis. Has a chymotrypsin-like activity. Plays a major role in the degradation of misfolded proteins. This is ATP-dependent Clp protease proteolytic subunit from Geobacter metallireducens (strain ATCC 53774 / DSM 7210 / GS-15).